The primary structure comprises 782 residues: Structure-specific endonuclease subunit SLX4 (782 aa).

Disordered stretches follow at residues 63–91 (TPKP…MSAM) and 359–425 (KEHE…KKSK). Positions 73-84 (GLRKTGSRKSKK) are enriched in basic residues. Positions 374-388 (PAQSLTQSQVPSSID) are enriched in polar residues.

This sequence belongs to the SLX4 family. As to quaternary structure, forms a heterodimer with SLX1. Phosphorylated in response to DNA damage.

It localises to the nucleus. Its function is as follows. Regulatory subunit of the SLX1-SLX4 structure-specific endonuclease that resolves DNA secondary structures generated during DNA repair and recombination. Has endonuclease activity towards branched DNA substrates, introducing single-strand cuts in duplex DNA close to junctions with ss-DNA. This is Structure-specific endonuclease subunit SLX4 from Scheffersomyces stipitis (strain ATCC 58785 / CBS 6054 / NBRC 10063 / NRRL Y-11545) (Yeast).